The sequence spans 508 residues: Serine/threonine-protein kinase VRK2 (508 aa).

The Protein kinase domain maps to 29–319 (WVLGKKIGSG…KKILNPHGIP (291 aa)). ATP is bound by residues 35–43 (IGSGGFGLI) and K61. Catalysis depends on D166, which acts as the Proton acceptor. T336 bears the Phosphothreonine mark. Positions 397–508 (TRRRQKYQES…MLVFLALFFL (112 aa)) are interaction with MAP3K7. S406 is subject to Phosphoserine. A helical; Anchor for type IV membrane protein transmembrane segment spans residues 487–507 (VYYYRIIIPVLLMLVFLALFF).

It belongs to the protein kinase superfamily. CK1 Ser/Thr protein kinase family. VRK subfamily. Isoform 1 interacts with MAP3K7, MAP2K7, MAP2K1 and KSR1. Isoform 1 and isoform 2 interact with RAN and MAPK8IP1. As to quaternary structure, (Microbial infection) Isoform 1 interacts with Epstein-Barr virus BHRF1; this interaction is involved in protecting cells from apoptosis. In terms of assembly, (Microbial infection) Isoform 1 interacts with vaccinia protein B12. In terms of processing, autophosphorylated. As to expression, isoform 1 and isoform 2 are expressed in various tumor cell lines. Expression of isoform 1 inversely correlates with ERBB2 in breast carcinomas (at protein level). Widely expressed. Highly expressed in fetal liver, skeletal muscle, pancreas, heart, peripheral blood leukocytes and testis.

The protein localises to the cytoplasm. The protein resides in the endoplasmic reticulum membrane. It localises to the mitochondrion membrane. It is found in the nucleus envelope. Its subcellular location is the nucleus. The enzyme catalyses L-seryl-[protein] + ATP = O-phospho-L-seryl-[protein] + ADP + H(+). It catalyses the reaction L-threonyl-[protein] + ATP = O-phospho-L-threonyl-[protein] + ADP + H(+). With respect to regulation, RAN inhibits its autophosphorylation and its ability to phosphorylate histone H3. Serine/threonine kinase that regulates several signal transduction pathways. Isoform 1 modulates the stress response to hypoxia and cytokines, such as interleukin-1 beta (IL1B) and this is dependent on its interaction with MAPK8IP1, which assembles mitogen-activated protein kinase (MAPK) complexes. Inhibition of signal transmission mediated by the assembly of MAPK8IP1-MAPK complexes reduces JNK phosphorylation and JUN-dependent transcription. Phosphorylates 'Thr-18' of p53/TP53, histone H3, and may also phosphorylate MAPK8IP1. Phosphorylates BANF1 and disrupts its ability to bind DNA and reduces its binding to LEM domain-containing proteins. Down-regulates the transactivation of transcription induced by ERBB2, HRAS, BRAF, and MEK1. Blocks the phosphorylation of ERK in response to ERBB2 and HRAS. Can also phosphorylate the following substrates that are commonly used to establish in vitro kinase activity: casein, MBP and histone H2B, but it is not sure that this is physiologically relevant. In terms of biological role, phosphorylates 'Thr-18' of p53/TP53, as well as histone H3. Reduces p53/TP53 ubiquitination by MDM2, promotes p53/TP53 acetylation by EP300 and thereby increases p53/TP53 stability and activity. This Homo sapiens (Human) protein is Serine/threonine-protein kinase VRK2 (VRK2).